The primary structure comprises 123 residues: Large ribosomal subunit protein eL8 (123 aa).

This sequence belongs to the eukaryotic ribosomal protein eL8 family. In terms of assembly, part of the 50S ribosomal subunit. Probably part of the RNase P complex.

The protein resides in the cytoplasm. Multifunctional RNA-binding protein that recognizes the K-turn motif in ribosomal RNA, the RNA component of RNase P, box H/ACA, box C/D and box C'/D' sRNAs. In Thermococcus kodakarensis (strain ATCC BAA-918 / JCM 12380 / KOD1) (Pyrococcus kodakaraensis (strain KOD1)), this protein is Large ribosomal subunit protein eL8.